The following is a 540-amino-acid chain: Cytokinin dehydrogenase 5 (540 aa).

The first 22 residues, 1-22, serve as a signal peptide directing secretion; sequence MNREMTSSFLLLTFAICKLIIA. One can recognise an FAD-binding PCMH-type domain in the interval 63–241; the sequence is SPEEPLAVLH…TRARISLEPA (179 aa). Positions 97, 99, and 101 each coordinate FAD. Position 102 is a pros-8alpha-FAD histidine (His-102). 7 residues coordinate FAD: Ser-103, Gln-107, Asp-165, Thr-170, Ser-176, Ile-180, and Ile-231. 2 N-linked (GlcNAc...) asparagine glycosylation sites follow: Asn-310 and Asn-406. Residues Tyr-479 and Gln-517 each contribute to the FAD site.

The protein belongs to the oxygen-dependent FAD-linked oxidoreductase family. FAD is required as a cofactor. As to expression, expressed in the developing leaf petioles and in the rib zone of the axillary shoot meristems. In roots, expressed in the vascular cylinder within the root apical meristem and only faintly detectable in the differentiated root.

It localises to the secreted. The protein resides in the extracellular space. The enzyme catalyses N(6)-dimethylallyladenine + A + H2O = 3-methyl-2-butenal + adenine + AH2. Functionally, catalyzes the oxidation of cytokinins, a family of N(6)-substituted adenine derivatives that are plant hormones, where the substituent is an isopentenyl group. In association with CKX3 regulates the activity of the reproductive meristems, flower organ size and ovule formation. This is Cytokinin dehydrogenase 5 (CKX5) from Arabidopsis thaliana (Mouse-ear cress).